The sequence spans 328 residues: DNA-directed RNA polymerase subunit alpha (328 aa).

The tract at residues 1-244 is alpha N-terminal domain (alpha-NTD); that stretch reads MEKFLKYEIK…EHLNPIVSVN (244 aa). The alpha C-terminal domain (alpha-CTD) stretch occupies residues 261–328; the sequence is KVKSFAKQIE…VQELGLKFRS (68 aa).

This sequence belongs to the RNA polymerase alpha chain family. Homodimer. The RNAP catalytic core consists of 2 alpha, 1 beta, 1 beta' and 1 omega subunit. When a sigma factor is associated with the core the holoenzyme is formed, which can initiate transcription.

The catalysed reaction is RNA(n) + a ribonucleoside 5'-triphosphate = RNA(n+1) + diphosphate. In terms of biological role, DNA-dependent RNA polymerase catalyzes the transcription of DNA into RNA using the four ribonucleoside triphosphates as substrates. In Mycoplasma genitalium (strain ATCC 33530 / DSM 19775 / NCTC 10195 / G37) (Mycoplasmoides genitalium), this protein is DNA-directed RNA polymerase subunit alpha.